A 75-amino-acid chain; its full sequence is Notewaprin-b (75 aa).

An N-terminal signal peptide occupies residues 1–24 (MSSGGLLLLLGLLTLWAELTPVSS). The WAP domain maps to 27 to 72 (RPKKPGLCPPRPQKPPCVRECKNDWICPGEQKCCRYGCIYECRDPI). Disulfide bonds link Cys34/Cys60, Cys43/Cys64, Cys47/Cys59, and Cys53/Cys68.

This sequence belongs to the venom waprin family. As to expression, expressed by the venom gland.

The protein localises to the secreted. Functionally, damages membranes of susceptible bacteria. Has no hemolytic activity. Not toxic to mice. Does not inhibit the proteinases elastase and cathepsin G. In Notechis scutatus scutatus (Mainland tiger snake), this protein is Notewaprin-b.